Here is a 1622-residue protein sequence, read N- to C-terminus: Ferredoxin-dependent glutamate synthase 1, chloroplastic/mitochondrial (1622 aa).

The transit peptide at 1 to 105 directs the protein to the chloroplast and mitochondrion; it reads MAMQSLSPVP…LEDILSERGA (105 aa). C106 functions as the For GATase activity in the catalytic mechanism. In terms of domain architecture, Glutamine amidotransferase type-2 spans 106 to 505; that stretch reads CGVGFIANLD…PGMMIAVDLV (400 aa). 1184 to 1241 contacts FMN; it reads LTETHQTLIANGLRERVILRVDGGLKSGVDVLMAAAMGADEYGFGSLAMIATGCVMAR. [3Fe-4S] cluster contacts are provided by C1237, C1243, and C1248.

Belongs to the glutamate synthase family. As to quaternary structure, interacts with SHM1. [3Fe-4S] cluster is required as a cofactor. It depends on FAD as a cofactor. Requires FMN as cofactor. Highly expressed in leaves. High expression in the leaf mesophyll and phloem companion cell-sieve element complex.

Its subcellular location is the plastid. It is found in the chloroplast stroma. The protein resides in the mitochondrion matrix. The enzyme catalyses 2 oxidized [2Fe-2S]-[ferredoxin] + 2 L-glutamate = L-glutamine + 2 reduced [2Fe-2S]-[ferredoxin] + 2-oxoglutarate + 2 H(+). It functions in the pathway amino-acid biosynthesis; L-glutamate biosynthesis via GLT pathway; L-glutamate from 2-oxoglutarate and L-glutamine (ferredoxin route): step 1/1. It participates in energy metabolism; nitrogen metabolism. Functionally, involved in glutamate biosynthesis in leaf. Required for the reassimilation of ammonium ions generated during photorespiration. The chain is Ferredoxin-dependent glutamate synthase 1, chloroplastic/mitochondrial from Arabidopsis thaliana (Mouse-ear cress).